A 369-amino-acid chain; its full sequence is Aspartate-semialdehyde dehydrogenase (369 aa).

Residues 11–14, 38–39, and Gln75 contribute to the NADP(+) site; these read RGMV and TS. Position 104 (Arg104) interacts with phosphate. Cys137 serves as the catalytic Acyl-thioester intermediate. Residue Gln164 participates in substrate binding. NADP(+) is bound by residues 167–168 and Pro195; that span reads SG. Glu243 contributes to the substrate binding site. Lys246 provides a ligand contact to phosphate. Arg269 serves as a coordination point for substrate. The Proton acceptor role is filled by His276. Gln352 lines the NADP(+) pocket.

It belongs to the aspartate-semialdehyde dehydrogenase family. In terms of assembly, homodimer.

The catalysed reaction is L-aspartate 4-semialdehyde + phosphate + NADP(+) = 4-phospho-L-aspartate + NADPH + H(+). Its pathway is amino-acid biosynthesis; L-lysine biosynthesis via DAP pathway; (S)-tetrahydrodipicolinate from L-aspartate: step 2/4. The protein operates within amino-acid biosynthesis; L-methionine biosynthesis via de novo pathway; L-homoserine from L-aspartate: step 2/3. It participates in amino-acid biosynthesis; L-threonine biosynthesis; L-threonine from L-aspartate: step 2/5. Its function is as follows. Catalyzes the NADPH-dependent formation of L-aspartate-semialdehyde (L-ASA) by the reductive dephosphorylation of L-aspartyl-4-phosphate. In Buchnera aphidicola subsp. Baizongia pistaciae (strain Bp), this protein is Aspartate-semialdehyde dehydrogenase.